A 236-amino-acid polypeptide reads, in one-letter code: Zinc finger AN1 domain-containing stress-associated protein 13 (236 aa).

2 disordered regions span residues 48 to 81 and 150 to 173; these read KEGRSGGGGGSEGQRTDSRLQLPTTSIVDSPGKR and TVPEGIPVDEGAMPPPPPPRAKTK. The segment covering 66-75 has biased composition (polar residues); sequence RLQLPTTSIV. An AN1-type; degenerate zinc finger spans residues 170 to 216; sequence AKTKSRCAACGRRVGLMGFECRCGAVFCGAHPLLGQARLWLRLQGRA. Zn(2+)-binding residues include cysteine 176, cysteine 179, cysteine 197, and histidine 200.

May be involved in environmental stress response. This chain is Zinc finger AN1 domain-containing stress-associated protein 13 (SAP13), found in Oryza sativa subsp. japonica (Rice).